The chain runs to 84 residues: uncharacterized protein (84 aa).

It belongs to the csb family.

This is an uncharacterized protein from Dictyostelium discoideum (Social amoeba).